Here is a 185-residue protein sequence, read N- to C-terminus: Probable NEDD8-conjugating enzyme Ubc12-like (185 aa).

Residues 8 to 29 (KEKQREESQSNNGRGASTVKKQ) form a disordered region. Polar residues predominate over residues 16–28 (QSNNGRGASTVKK). A UBC core domain is found at 31–176 (AGELRLHKDI…VRRAMMGGQV (146 aa)). The active-site Glycyl thioester intermediate is Cys114.

This sequence belongs to the ubiquitin-conjugating enzyme family. UBC12 subfamily.

The protein operates within protein modification; protein neddylation. Its function is as follows. Accepts the ubiquitin-like protein NEDD8/RUB1 from the ECR1-AXR1 E1 complex and catalyzes its covalent attachment to other proteins. In Arabidopsis thaliana (Mouse-ear cress), this protein is Probable NEDD8-conjugating enzyme Ubc12-like (RCE2).